The following is a 296-amino-acid chain: Polyamine aminopropyltransferase (296 aa).

Positions 16 to 251 (HLWYFEYYTG…GMWSYTFASK (236 aa)) constitute a PABS domain. Residue glutamine 46 coordinates S-methyl-5'-thioadenosine. Positions 77 and 101 each coordinate spermidine. Residues glutamate 121 and 152-153 (NG) contribute to the S-methyl-5'-thioadenosine site. Aspartate 170 functions as the Proton acceptor in the catalytic mechanism. Residue 170 to 173 (DSTD) participates in spermidine binding.

The protein belongs to the spermidine/spermine synthase family. Homodimer or homotetramer.

It is found in the cytoplasm. The catalysed reaction is S-adenosyl 3-(methylsulfanyl)propylamine + putrescine = S-methyl-5'-thioadenosine + spermidine + H(+). It participates in amine and polyamine biosynthesis; spermidine biosynthesis; spermidine from putrescine: step 1/1. Its function is as follows. Catalyzes the irreversible transfer of a propylamine group from the amino donor S-adenosylmethioninamine (decarboxy-AdoMet) to putrescine (1,4-diaminobutane) to yield spermidine. This chain is Polyamine aminopropyltransferase, found in Thermotoga neapolitana (strain ATCC 49049 / DSM 4359 / NBRC 107923 / NS-E).